The following is a 314-amino-acid chain: 4-diphosphocytidyl-2-C-methyl-D-erythritol kinase (314 aa).

Residue Lys-11 is part of the active site. 95-105 (PIGAGLAGGST) contacts ATP. Asp-137 is a catalytic residue.

Belongs to the GHMP kinase family. IspE subfamily.

The catalysed reaction is 4-CDP-2-C-methyl-D-erythritol + ATP = 4-CDP-2-C-methyl-D-erythritol 2-phosphate + ADP + H(+). It participates in isoprenoid biosynthesis; isopentenyl diphosphate biosynthesis via DXP pathway; isopentenyl diphosphate from 1-deoxy-D-xylulose 5-phosphate: step 3/6. Functionally, catalyzes the phosphorylation of the position 2 hydroxy group of 4-diphosphocytidyl-2C-methyl-D-erythritol. The sequence is that of 4-diphosphocytidyl-2-C-methyl-D-erythritol kinase from Synechococcus elongatus (strain ATCC 33912 / PCC 7942 / FACHB-805) (Anacystis nidulans R2).